We begin with the raw amino-acid sequence, 429 residues long: MYLLIVKKTDRLEGIVKAPPSKSYTHRAVIGASLADGVSRIINPLWGADCLSSVHGCRMLGANIELDKEKDEWIVKGGELKTPDNIIDIGNSGTTLRILTSIASQIPKGYAILTGDDSIRKRPMQPLLDALKQLNIEAFSSKLDGTAPIIVKSGKIYGNVVKIRGDISSQFITSLMMLLPFNKEDTEIILTSPLKSKPYIDITLDILNKFGIKIDKTDNGFLVYGNQKYKPIDYIVEGDYSSASYLIAAGVLINSNITIENLFANSKQGDKAIINIVKEMGADIKVKKDKVIIEGEYSLKGIDVDVKDIPDLVPTIAVLGCFAEGKTEIYNGEHVRLKECDRLRACAVELKKMGADIEEKPDGLIIRGVKKLKGAKLNTYHDHRLVMAFTIAGLKAEGETIIEGEEAVKISFPNFVDVMKSLGANIEVK.

3-phosphoshikimate-binding residues include Lys22, Ser23, and Arg27. Lys22 contributes to the phosphoenolpyruvate binding site. Residues Gly93 and Arg122 each coordinate phosphoenolpyruvate. 3-phosphoshikimate contacts are provided by Ser168, Ser169, Gln170, Ser196, Asp311, and Lys338. Gln170 provides a ligand contact to phosphoenolpyruvate. The Proton acceptor role is filled by Asp311. Phosphoenolpyruvate-binding residues include Arg342 and Arg384.

Belongs to the EPSP synthase family. In terms of assembly, monomer.

It localises to the cytoplasm. It catalyses the reaction 3-phosphoshikimate + phosphoenolpyruvate = 5-O-(1-carboxyvinyl)-3-phosphoshikimate + phosphate. Its pathway is metabolic intermediate biosynthesis; chorismate biosynthesis. Functionally, catalyzes the transfer of the enolpyruvyl moiety of phosphoenolpyruvate (PEP) to the 5-hydroxyl of shikimate-3-phosphate (S3P) to produce enolpyruvyl shikimate-3-phosphate and inorganic phosphate. This is 3-phosphoshikimate 1-carboxyvinyltransferase from Methanocaldococcus jannaschii (strain ATCC 43067 / DSM 2661 / JAL-1 / JCM 10045 / NBRC 100440) (Methanococcus jannaschii).